The sequence spans 319 residues: Protein-methionine-sulfoxide reductase catalytic subunit MsrP (319 aa).

Residues 1-40 constitute a signal peptide (tat-type signal); it reads MHKLNENDVTPEHIFFERRKIIQSMGLMGAASLLPRFSLA. Residues asparagine 73, 76-77, cysteine 131, threonine 166, asparagine 218, arginine 223, and 234-236 each bind Mo-molybdopterin; these read YE and NIK.

This sequence belongs to the MsrP family. As to quaternary structure, heterodimer of a catalytic subunit (MsrP) and a heme-binding subunit (MsrQ). Mo-molybdopterin is required as a cofactor. Predicted to be exported by the Tat system. The position of the signal peptide cleavage has not been experimentally proven.

The protein resides in the periplasm. The catalysed reaction is L-methionyl-[protein] + a quinone + H2O = L-methionyl-(S)-S-oxide-[protein] + a quinol. It carries out the reaction L-methionyl-[protein] + a quinone + H2O = L-methionyl-(R)-S-oxide-[protein] + a quinol. Functionally, part of the MsrPQ system that repairs oxidized periplasmic proteins containing methionine sulfoxide residues (Met-O), using respiratory chain electrons. Thus protects these proteins from oxidative-stress damage caused by reactive species of oxygen and chlorine generated by the host defense mechanisms. MsrPQ is essential for the maintenance of envelope integrity under bleach stress, rescuing a wide series of structurally unrelated periplasmic proteins from methionine oxidation. The catalytic subunit MsrP is non-stereospecific, being able to reduce both (R-) and (S-) diastereoisomers of methionine sulfoxide. This is Protein-methionine-sulfoxide reductase catalytic subunit MsrP from Pasteurella multocida (strain Pm70).